Reading from the N-terminus, the 193-residue chain is MARNANVTRETKETKIEVFLDIDRKGEIKVSTPVPFFNHMLITLLTYMNSTATVSATDKLPYDDHHIIEDVAITLGLAIKEALGDKRGIKRFSHQIIPMDEALVLVSLDISNRGMAFVNLNLKRSEIGGLATENIPHFFQSFAYNSGVTLHISQLSGYNTHHIIEASFKALGLALYEATRIVDNEIRSTKGVI.

It belongs to the imidazoleglycerol-phosphate dehydratase family.

It localises to the cytoplasm. The catalysed reaction is D-erythro-1-(imidazol-4-yl)glycerol 3-phosphate = 3-(imidazol-4-yl)-2-oxopropyl phosphate + H2O. It participates in amino-acid biosynthesis; L-histidine biosynthesis; L-histidine from 5-phospho-alpha-D-ribose 1-diphosphate: step 6/9. The polypeptide is Imidazoleglycerol-phosphate dehydratase (Saccharolobus islandicus (strain M.16.27) (Sulfolobus islandicus)).